The following is a 338-amino-acid chain: 1-aminocyclopropane-1-carboxylate deaminase (338 aa).

Lys-51 bears the N6-(pyridoxal phosphate)lysine mark. Ser-78 functions as the Nucleophile in the catalytic mechanism.

It belongs to the ACC deaminase/D-cysteine desulfhydrase family. In terms of assembly, homotrimer. Pyridoxal 5'-phosphate serves as cofactor.

It carries out the reaction 1-aminocyclopropane-1-carboxylate + H2O = 2-oxobutanoate + NH4(+). In terms of biological role, catalyzes a cyclopropane ring-opening reaction, the irreversible conversion of 1-aminocyclopropane-1-carboxylate (ACC) to ammonia and alpha-ketobutyrate. Allows growth on ACC as a nitrogen source. The sequence is that of 1-aminocyclopropane-1-carboxylate deaminase from Methylibium petroleiphilum (strain ATCC BAA-1232 / LMG 22953 / PM1).